Reading from the N-terminus, the 338-residue chain is Glyceraldehyde-3-phosphate dehydrogenase, cytosolic (338 aa).

NAD(+) contacts are provided by residues 14–15 (RI), D36, and R83. D-glyceraldehyde 3-phosphate is bound by residues 154-156 (SCT), T185, 214-215 (TG), and R237. The Nucleophile role is filled by C155. N319 lines the NAD(+) pocket.

Belongs to the glyceraldehyde-3-phosphate dehydrogenase family. Homotetramer.

It is found in the cytoplasm. The enzyme catalyses D-glyceraldehyde 3-phosphate + phosphate + NAD(+) = (2R)-3-phospho-glyceroyl phosphate + NADH + H(+). It participates in carbohydrate degradation; glycolysis; pyruvate from D-glyceraldehyde 3-phosphate: step 1/5. In terms of biological role, key enzyme in glycolysis that catalyzes the first step of the pathway by converting D-glyceraldehyde 3-phosphate (G3P) into 3-phospho-D-glyceroyl phosphate. Essential for the maintenance of cellular ATP levels and carbohydrate metabolism. This Ranunculus acris (Meadow buttercup) protein is Glyceraldehyde-3-phosphate dehydrogenase, cytosolic (GAPC).